The following is a 177-amino-acid chain: Large ribosomal subunit protein uL6 (177 aa).

The protein belongs to the universal ribosomal protein uL6 family. In terms of assembly, part of the 50S ribosomal subunit.

Its function is as follows. This protein binds to the 23S rRNA, and is important in its secondary structure. It is located near the subunit interface in the base of the L7/L12 stalk, and near the tRNA binding site of the peptidyltransferase center. The protein is Large ribosomal subunit protein uL6 of Sodalis glossinidius (strain morsitans).